Here is a 471-residue protein sequence, read N- to C-terminus: Protein naked cuticle homolog 1 (471 aa).

Disordered stretches follow at residues Met-1–Phe-23 and Gln-41–Asp-82. A lipid anchor (N-myristoyl glycine) is attached at Gly-2. Basic and acidic residues predominate over residues Gly-62–Leu-75. Positions Gln-125–Asp-190 are interaction with DVL1, DVL2 and DVL3. The 36-residue stretch at Glu-131–Val-166 folds into the EF-hand domain. Ca(2+) is bound by residues Asp-144, Asp-146, Asn-148, Lys-150, and Asp-155. Disordered stretches follow at residues Gly-273–Asp-314, Gly-337–Ala-382, and Gln-448–Pro-471. Basic residues predominate over residues His-453–Pro-471.

The protein belongs to the NKD family. As to quaternary structure, interacts with DVL1, DVL2, DVL3 and PPP2R3A. Highly expressed in lung. Also expressed in brain, heart, kidney, liver, skin, stomach and testis. Within the testis expression is found in the seminiferous epithelium and round and elongating spermatids.

It localises to the cell membrane. Its subcellular location is the cytoplasm. Functionally, cell autonomous antagonist of the canonical Wnt signaling pathway. May activate a second Wnt signaling pathway that controls planar cell polarity. Required for spermatogenesis. This Mus musculus (Mouse) protein is Protein naked cuticle homolog 1 (Nkd1).